A 740-amino-acid polypeptide reads, in one-letter code: Leucine-rich repeat neuronal protein 4 (740 aa).

The first 18 residues, 1 to 18 (MRQTLPLLLLTVLRPSWA), serve as a signal peptide directing secretion. At 19 to 679 (DPPQEKVPLF…PCAAFTTKPS (661 aa)) the chain is on the extracellular side. An N-linked (GlcNAc...) asparagine glycan is attached at Asn42. 10 LRR repeats span residues 51–74 (LPAA…GCLP), 75–97 (RTLR…ELGH), 98–123 (LEQL…GPAG), 125–144 (HTLD…TGPA), 145–168 (LSSL…AFAC), 174–197 (LLNL…AFAG), 203–226 (LVTL…WIRD), 228–251 (PKLT…IFKM), 253–276 (PNLQ…IFQD), and 277–300 (TPHL…TLDS). N-linked (GlcNAc...) asparagine glycosylation occurs at Asn176. Asn289, Asn379, and Asn442 each carry an N-linked (GlcNAc...) asparagine glycan. The segment at 389 to 517 (VAPSAAPATR…QAPNPSLSEG (129 aa)) is disordered. 2 stretches are compositionally biased toward polar residues: residues 430–454 (APST…STTR) and 490–514 (WDRS…NPSL). The 101-residue stretch at 579-679 (IPDPPRLQGV…PCAAFTTKPS (101 aa)) folds into the Fibronectin type-III domain. N-linked (GlcNAc...) asparagine glycosylation occurs at Asn622. A helical transmembrane segment spans residues 680–700 (FALLLSGLCAASGLLLASTVV). Over 701–740 (LSACLCRRGQTLGLQRCDTHLVAYKNPAFDDYPLGLQTVS) the chain is Cytoplasmic.

It is found in the membrane. May play an important role in hippocampus-dependent long-lasting memory. The sequence is that of Leucine-rich repeat neuronal protein 4 (LRRN4) from Homo sapiens (Human).